We begin with the raw amino-acid sequence, 121 residues long: Immunoglobulin heavy variable 6-1 (121 aa).

Residues 1–20 (MSVSFLIFLPVLGLPWGVLS) form the signal peptide. The interval 21-45 (QVQLQQSGPGLVKPSQTLSLTCAIS) is framework-1. The 101-residue stretch at 21-121 (QVQLQQSGPG…EDTAVYYCAR (101 aa)) folds into the Ig-like domain. A disulfide bond links Cys42 and Cys119. Residues 46–55 (GDSVSSNSAA) form a complementarity-determining-1 region. The segment at 56-72 (WNWIRQSPSRGLEWLGR) is framework-2. A complementarity-determining-2 region spans residues 73–81 (TYYRSKWYN). Positions 82–119 (DYAVSVKSRITINPDTSKNQFSLQLNSVTPEDTAVYYC) are framework-3. The complementarity-determining-3 stretch occupies residues 120-121 (AR).

As to quaternary structure, immunoglobulins are composed of two identical heavy chains and two identical light chains; disulfide-linked.

It localises to the secreted. The protein localises to the cell membrane. In terms of biological role, v region of the variable domain of immunoglobulin heavy chains that participates in the antigen recognition. Immunoglobulins, also known as antibodies, are membrane-bound or secreted glycoproteins produced by B lymphocytes. In the recognition phase of humoral immunity, the membrane-bound immunoglobulins serve as receptors which, upon binding of a specific antigen, trigger the clonal expansion and differentiation of B lymphocytes into immunoglobulins-secreting plasma cells. Secreted immunoglobulins mediate the effector phase of humoral immunity, which results in the elimination of bound antigens. The antigen binding site is formed by the variable domain of one heavy chain, together with that of its associated light chain. Thus, each immunoglobulin has two antigen binding sites with remarkable affinity for a particular antigen. The variable domains are assembled by a process called V-(D)-J rearrangement and can then be subjected to somatic hypermutations which, after exposure to antigen and selection, allow affinity maturation for a particular antigen. The chain is Immunoglobulin heavy variable 6-1 from Homo sapiens (Human).